We begin with the raw amino-acid sequence, 241 residues long: Triosephosphate isomerase (241 aa).

A substrate-binding site is contributed by Asn9–Lys11. The active-site Electrophile is His96. The active-site Proton acceptor is the Glu165. Residues Gly171, Ser204, and Gly225–Gly226 each bind substrate.

Belongs to the triosephosphate isomerase family. In terms of assembly, homodimer.

It localises to the cytoplasm. The catalysed reaction is D-glyceraldehyde 3-phosphate = dihydroxyacetone phosphate. It participates in carbohydrate biosynthesis; gluconeogenesis. The protein operates within carbohydrate degradation; glycolysis; D-glyceraldehyde 3-phosphate from glycerone phosphate: step 1/1. In terms of biological role, involved in the gluconeogenesis. Catalyzes stereospecifically the conversion of dihydroxyacetone phosphate (DHAP) to D-glyceraldehyde-3-phosphate (G3P). The protein is Triosephosphate isomerase of Acaryochloris marina (strain MBIC 11017).